A 147-amino-acid polypeptide reads, in one-letter code: Lysozyme C (147 aa).

The N-terminal stretch at 1 to 18 (MRSLLILVLCFLPLAALG) is a signal peptide. Residues 19-147 (KVFGRCELAA…VQAWIRGCRL (129 aa)) enclose the C-type lysozyme domain. Cystine bridges form between C24–C145, C48–C133, C82–C98, and C94–C112. Active-site residues include E53 and D70. D119 is a binding site for substrate.

This sequence belongs to the glycosyl hydrolase 22 family. In terms of assembly, monomer. In the egg white and polymorphonuclear leukocytes.

Its subcellular location is the secreted. The catalysed reaction is Hydrolysis of (1-&gt;4)-beta-linkages between N-acetylmuramic acid and N-acetyl-D-glucosamine residues in a peptidoglycan and between N-acetyl-D-glucosamine residues in chitodextrins.. Functionally, lysozymes have primarily a bacteriolytic function; those in tissues and body fluids are associated with the monocyte-macrophage system and enhance the activity of immunoagents. Has bacteriolytic activity against M.luteus. In Gallus gallus (Chicken), this protein is Lysozyme C (LYZ).